We begin with the raw amino-acid sequence, 116 residues long: Large ribosomal subunit protein bL17 (116 aa).

It belongs to the bacterial ribosomal protein bL17 family. As to quaternary structure, part of the 50S ribosomal subunit. Contacts protein L32.

The polypeptide is Large ribosomal subunit protein bL17 (Helicobacter acinonychis (strain Sheeba)).